We begin with the raw amino-acid sequence, 535 residues long: Probable anion transporter 2, chloroplastic (535 aa).

A chloroplast-targeting transit peptide spans 1 to 95 (MASIRSCVSV…RERAVAAMCS (95 aa)). A run of 12 helical transmembrane segments spans residues 125-145 (VVAL…VMSV), 160-180 (FLGI…MVGG), 191-211 (VMAG…WAAS), 215-235 (IMLL…FPTM), 254-274 (ISMG…PIIM), 279-299 (LAGT…VWLF), 343-363 (IEMW…FVLL), 381-401 (AAWF…VAGA), 413-433 (VALV…VSLL), 443-463 (VAAV…AGYF), 483-503 (GIGT…VQWL), and 504-524 (GSFQ…TVFY).

The protein belongs to the major facilitator superfamily. Sodium/anion cotransporter (TC 2.A.1.14) family.

The protein localises to the plastid. The protein resides in the chloroplast membrane. Probable anion transporter. This Oryza sativa subsp. japonica (Rice) protein is Probable anion transporter 2, chloroplastic (PHT4;2).